The chain runs to 400 residues: Elongation factor Tu 2 (400 aa).

Residues 10–209 (KPHLNIGTIG…AVDSYIPLPQ (200 aa)) enclose the tr-type G domain. The interval 19 to 26 (GHIDHGKT) is G1. Residue 19 to 26 (GHIDHGKT) participates in GTP binding. T26 is a binding site for Mg(2+). Positions 60–64 (GITIN) are G2. The interval 81-84 (DCPG) is G3. Residues 81–85 (DCPGH) and 136–139 (NKID) contribute to the GTP site. A G4 region spans residues 136-139 (NKID). Residues 174–176 (SAL) form a G5 region.

Belongs to the TRAFAC class translation factor GTPase superfamily. Classic translation factor GTPase family. EF-Tu/EF-1A subfamily. Monomer.

It is found in the cytoplasm. The enzyme catalyses GTP + H2O = GDP + phosphate + H(+). In terms of biological role, GTP hydrolase that promotes the GTP-dependent binding of aminoacyl-tRNA to the A-site of ribosomes during protein biosynthesis. The chain is Elongation factor Tu 2 from Syntrophomonas wolfei subsp. wolfei (strain DSM 2245B / Goettingen).